The sequence spans 551 residues: Chaperonin GroEL (551 aa).

ATP-binding positions include Thr30–Pro33, Lys51, Asp87–Thr91, Gly415, Asn479–Ala481, and Asp495. Positions Asp523–Met551 are disordered. Residues Gly539–Met551 are compositionally biased toward gly residues.

Belongs to the chaperonin (HSP60) family. As to quaternary structure, forms a cylinder of 14 subunits composed of two heptameric rings stacked back-to-back. Interacts with the co-chaperonin GroES.

The protein resides in the cytoplasm. The enzyme catalyses ATP + H2O + a folded polypeptide = ADP + phosphate + an unfolded polypeptide.. Together with its co-chaperonin GroES, plays an essential role in assisting protein folding. The GroEL-GroES system forms a nano-cage that allows encapsulation of the non-native substrate proteins and provides a physical environment optimized to promote and accelerate protein folding. This is Chaperonin GroEL from Buchnera aphidicola subsp. Chaetophorus leucomelas.